The following is a 66-amino-acid chain: Large ribosomal subunit protein bL33 (66 aa).

It belongs to the bacterial ribosomal protein bL33 family.

This chain is Large ribosomal subunit protein bL33, found in Wolbachia sp. subsp. Brugia malayi (strain TRS).